The primary structure comprises 547 residues: CTP synthase (547 aa).

Residues 1 to 265 form an amidoligase domain region; sequence MARYVFITGG…DQAVLDAFGI (265 aa). Residue Ser-13 coordinates CTP. Ser-13 contacts UTP. ATP is bound by residues 14–19 and Asp-71; that span reads SLGKGL. Mg(2+) is bound by residues Asp-71 and Glu-139. CTP is bound by residues 146–148, 186–191, and Lys-222; these read DIE and KTKPTQ. UTP-binding positions include 186–191 and Lys-222; that span reads KTKPTQ. Residues 291-546 enclose the Glutamine amidotransferase type-1 domain; sequence RVAIVGKYTQ…IRAAVEVSRL (256 aa). Residue Gly-353 participates in L-glutamine binding. The Nucleophile; for glutamine hydrolysis role is filled by Cys-380. L-glutamine contacts are provided by residues 381-384, Glu-404, and Arg-474; that span reads LGMQ. Active-site residues include His-519 and Glu-521.

Belongs to the CTP synthase family. Homotetramer.

It catalyses the reaction UTP + L-glutamine + ATP + H2O = CTP + L-glutamate + ADP + phosphate + 2 H(+). The catalysed reaction is L-glutamine + H2O = L-glutamate + NH4(+). It carries out the reaction UTP + NH4(+) + ATP = CTP + ADP + phosphate + 2 H(+). The protein operates within pyrimidine metabolism; CTP biosynthesis via de novo pathway; CTP from UDP: step 2/2. Allosterically activated by GTP, when glutamine is the substrate; GTP has no effect on the reaction when ammonia is the substrate. The allosteric effector GTP functions by stabilizing the protein conformation that binds the tetrahedral intermediate(s) formed during glutamine hydrolysis. Inhibited by the product CTP, via allosteric rather than competitive inhibition. Catalyzes the ATP-dependent amination of UTP to CTP with either L-glutamine or ammonia as the source of nitrogen. Regulates intracellular CTP levels through interactions with the four ribonucleotide triphosphates. This Cereibacter sphaeroides (strain ATCC 17025 / ATH 2.4.3) (Rhodobacter sphaeroides) protein is CTP synthase.